The following is a 75-amino-acid chain: Probable pilin MJ0431 (75 aa).

Positions 1-15 are excised as a propeptide; the sequence is MGKMKILKKLLSKKG. Positions 16 to 24 match the QXSXEXXXL motif; that stretch reads QLSMEVGVL.

Post-translationally, the N-terminus is cleaved by the prepilin peptidase EppA, which recognizes the class III signal sequence.

The protein localises to the secreted. It is found in the cell surface. The protein resides in the fimbrium. The protein is Probable pilin MJ0431 of Methanocaldococcus jannaschii (strain ATCC 43067 / DSM 2661 / JAL-1 / JCM 10045 / NBRC 100440) (Methanococcus jannaschii).